A 1554-amino-acid chain; its full sequence is Myosin-2 (1554 aa).

In terms of domain architecture, Myosin N-terminal SH3-like spans 4 to 57; sequence EVGTRCWYPDKQQGWIGGEITKHTNLSNKHQLELTLEDNQIVEIESETLDETKD. Residues 70–774 form the Myosin motor domain; that stretch reads EATEDLTSLS…MLAYLEKLRS (705 aa). Position 164–171 (164–171) interacts with ATP; sequence GESGAGKT. The tract at residues 443-523 is actin-binding; the sequence is FIGVLDIYGF…LGILSLLDEE (81 aa). IQ domains are found at residues 778–798, 800–824, 825–847, 848–872, 873–895, and 896–925; these read HNSSVLIQKKVKAVYYRKKYL, IISSIRNFHSRSEGFLTRQRVDLEF, KTQAAILIQSMVRSTSTRNKTIS, LLSAITRLQSLVRKQLAQKELLQRR, QRDAAVSIQKKIRAFEPRQSFNT, and TRRSTVVVQSLVRKKFAQKKLKDLKTEAKS. Residues 926 to 1079 are a coiled coil; sequence VNHLKEVSYK…IARLQAAVRS (154 aa). A non alpha-helical, tail domain region spans residues 1080 to 1554; the sequence is GVTSSTITST…VTVQESQRTE (475 aa). The segment covering 1082–1093 has biased composition (low complexity); it reads TSSTITSTPTAS. The segment at 1082-1109 is disordered; that stretch reads TSSTITSTPTASRRFSAHSSVADGTSPR. Positions 1098–1109 are enriched in polar residues; that stretch reads AHSSVADGTSPR. Positions 1205 to 1480 constitute a Dilute domain; that stretch reads AEVLSTIQKL…LNFVADRVKK (276 aa).

It belongs to the TRAFAC class myosin-kinesin ATPase superfamily. Myosin family. Homodimer. Interacts with calmodulin (CMD1) and the myosin light chain MLC1 through its IQ repeats.

Functionally, myosin heavy chain that is required for the cell cycle-regulated transport of various organelles and proteins for their segregation. Functions by binding with its tail domain to receptor proteins on organelles and exerting force with its N-terminal motor domain against actin filaments, thereby transporting its cargo along polarized actin cables. The sequence is that of Myosin-2 (MYO2) from Lachancea kluyveri (strain ATCC 58438 / CBS 3082 / BCRC 21498 / NBRC 1685 / JCM 7257 / NCYC 543 / NRRL Y-12651) (Yeast).